The sequence spans 232 residues: Small heat shock protein, chloroplastic (232 aa).

Residues 1 to 25 (MAQSVSLSTIASPILSQKPGSSVKS) show a composition bias toward polar residues. 2 disordered regions span residues 1 to 35 (MAQS…SFPL) and 48 to 81 (RAQA…RKPR). A chloroplast-targeting transit peptide spans 1 to 46 (MAQSVSLSTIASPILSQKPGSSVKSTPPCMASFPLRRQLPRLGLRN). Residues 55 to 78 (GDNKDNSVEVHRVNKDDQGTAVER) show a composition bias toward basic and acidic residues. Positions 124-232 (IGGGEIRVPW…ERTVIDVQIQ (109 aa)) constitute a sHSP domain.

The protein belongs to the small heat shock protein (HSP20) family.

It localises to the plastid. The protein resides in the chloroplast. In Pisum sativum (Garden pea), this protein is Small heat shock protein, chloroplastic (HSP21).